Consider the following 240-residue polypeptide: UDP-2,3-diacylglucosamine hydrolase (240 aa).

5 residues coordinate Mn(2+): aspartate 8, histidine 10, aspartate 41, asparagine 79, and histidine 114. A substrate-binding site is contributed by 79-80 (NR). Positions 122, 160, 164, 167, and 195 each coordinate substrate. The Mn(2+) site is built by histidine 195 and histidine 197.

Belongs to the LpxH family. Mn(2+) serves as cofactor.

It is found in the cell inner membrane. The enzyme catalyses UDP-2-N,3-O-bis[(3R)-3-hydroxytetradecanoyl]-alpha-D-glucosamine + H2O = 2-N,3-O-bis[(3R)-3-hydroxytetradecanoyl]-alpha-D-glucosaminyl 1-phosphate + UMP + 2 H(+). It functions in the pathway glycolipid biosynthesis; lipid IV(A) biosynthesis; lipid IV(A) from (3R)-3-hydroxytetradecanoyl-[acyl-carrier-protein] and UDP-N-acetyl-alpha-D-glucosamine: step 4/6. In terms of biological role, hydrolyzes the pyrophosphate bond of UDP-2,3-diacylglucosamine to yield 2,3-diacylglucosamine 1-phosphate (lipid X) and UMP by catalyzing the attack of water at the alpha-P atom. Involved in the biosynthesis of lipid A, a phosphorylated glycolipid that anchors the lipopolysaccharide to the outer membrane of the cell. The protein is UDP-2,3-diacylglucosamine hydrolase of Escherichia coli O127:H6 (strain E2348/69 / EPEC).